The primary structure comprises 682 residues: Methionine--tRNA ligase (682 aa).

A 'HIGH' region motif is present at residues 15-25 (PYANGAIHLGH). Zn(2+) is bound by residues cysteine 146, cysteine 149, cysteine 159, and cysteine 162. The 'KMSKS' region motif lies at 331–335 (KMSKS). Position 334 (lysine 334) interacts with ATP. In terms of domain architecture, tRNA-binding spans 580-682 (DFAKLDLRVA…QGVKPGMQVK (103 aa)).

This sequence belongs to the class-I aminoacyl-tRNA synthetase family. MetG type 1 subfamily. As to quaternary structure, homodimer. The cofactor is Zn(2+).

The protein resides in the cytoplasm. The catalysed reaction is tRNA(Met) + L-methionine + ATP = L-methionyl-tRNA(Met) + AMP + diphosphate. Functionally, is required not only for elongation of protein synthesis but also for the initiation of all mRNA translation through initiator tRNA(fMet) aminoacylation. This chain is Methionine--tRNA ligase, found in Pasteurella multocida (strain Pm70).